The chain runs to 428 residues: Serine--tRNA ligase (428 aa).

Position 231–233 (231–233 (TAE)) interacts with L-serine. 262–264 (RSE) serves as a coordination point for ATP. Glu285 is a binding site for L-serine. Position 349–352 (349–352 (EISS)) interacts with ATP. Residue Ser385 participates in L-serine binding.

Belongs to the class-II aminoacyl-tRNA synthetase family. Type-1 seryl-tRNA synthetase subfamily. As to quaternary structure, homodimer. The tRNA molecule binds across the dimer.

Its subcellular location is the cytoplasm. It carries out the reaction tRNA(Ser) + L-serine + ATP = L-seryl-tRNA(Ser) + AMP + diphosphate + H(+). It catalyses the reaction tRNA(Sec) + L-serine + ATP = L-seryl-tRNA(Sec) + AMP + diphosphate + H(+). It functions in the pathway aminoacyl-tRNA biosynthesis; selenocysteinyl-tRNA(Sec) biosynthesis; L-seryl-tRNA(Sec) from L-serine and tRNA(Sec): step 1/1. Its function is as follows. Catalyzes the attachment of serine to tRNA(Ser). Is also able to aminoacylate tRNA(Sec) with serine, to form the misacylated tRNA L-seryl-tRNA(Sec), which will be further converted into selenocysteinyl-tRNA(Sec). This Staphylococcus aureus (strain Mu3 / ATCC 700698) protein is Serine--tRNA ligase.